Here is a 352-residue protein sequence, read N- to C-terminus: Histidinol-phosphate aminotransferase (352 aa).

An N6-(pyridoxal phosphate)lysine modification is found at lysine 208.

The protein belongs to the class-II pyridoxal-phosphate-dependent aminotransferase family. Histidinol-phosphate aminotransferase subfamily. Homodimer. Pyridoxal 5'-phosphate is required as a cofactor.

The catalysed reaction is L-histidinol phosphate + 2-oxoglutarate = 3-(imidazol-4-yl)-2-oxopropyl phosphate + L-glutamate. Its pathway is amino-acid biosynthesis; L-histidine biosynthesis; L-histidine from 5-phospho-alpha-D-ribose 1-diphosphate: step 7/9. The polypeptide is Histidinol-phosphate aminotransferase (Streptococcus sanguinis (strain SK36)).